The primary structure comprises 518 residues: MTSSEIAMPGEVKADPAALMASLQLLPSPTPNLEIKYTKIFINNEWQNSESGRVFPVCNPATGEQVCEVQEADKVDIDKAVQAARLAFSLGSVWRRMDASERGRLLDKLADLVERDRATLATMESLNGGKPFLQAFYIDLQGVIKTLRYYAGWADKIHGMTIPVDGDYFTFTRHEPIGVCGQIIPWNFPLLMFTWKIAPALCCGNTVVIKPAEQTPLSALYMGALIKEAGFPPGVVNILPGYGPTAGAAIASHIGIDKIAFTGSTEVGKLIQEAAGRSNLKRVTLELGGKSPNIIFADADLDYAVEQAHQGVFFNQGQCCTAGSRIFVEESIYEEFVKRSVERAKRRIVGSPFDPTTEQGPQIDKKQYNKILELIQSGVAEGAKLECGGKGLGRKGFFIEPTVFSNVTDDMRIAKEEIFGPVQEILRFKTMDEVIERANNSDFGLVAAVFTNDINKALMVSSAMQAGTVWINCYNALNAQSPFGGFKMSGNGREMGEFGLREYSEVKTVTVKIPQKNS.

Tyr168 bears the Phosphotyrosine mark. NAD(+)-binding positions include 184–186 (IPW), 210–213 (KPAE), and 264–266 (STE). Glu286 acts as the Proton acceptor in catalysis. Cys320 (nucleophile) is an active-site residue. Phosphoserine is present on Ser351. Residues 366 to 370 (KQYNK) and Glu417 each bind NAD(+).

Belongs to the aldehyde dehydrogenase family. As to quaternary structure, homotetramer. In terms of tissue distribution, found in testis and less abundantly in lung, brain, heart, liver and kidney.

It localises to the cytoplasm. The enzyme catalyses retinal + NAD(+) + H2O = retinoate + NADH + 2 H(+). It catalyses the reaction all-trans-retinal + NAD(+) + H2O = all-trans-retinoate + NADH + 2 H(+). It carries out the reaction all-trans-13,14-dihydroretinal + NAD(+) + H2O = all-trans-13,14-dihydroretinoate + NADH + 2 H(+). The protein operates within cofactor metabolism; retinol metabolism. Functionally, catalyzes the NAD-dependent oxidation of aldehyde substrates, such as all-trans-retinal and all-trans-13,14-dihydroretinal, to their corresponding carboxylic acids, all-trans-retinoate and all-trans-13,14-dihydroretinoate, respectively. Retinoate signaling is critical for the transcriptional control of many genes, for instance it is crucial for initiation of meiosis in both male and female. Recognizes retinal as substrate, both in its free form and when bound to cellular retinol-binding protein. Lacks activity with benzaldehyde, acetaldehyde and octanal. Displays complete lack of activity with citral. This Rattus norvegicus (Rat) protein is Retinal dehydrogenase 2 (Aldh1a2).